The sequence spans 274 residues: Type III pantothenate kinase (274 aa).

6–13 (DVRNTHTV) lines the ATP pocket. 109 to 112 (GADR) is a substrate binding site. Aspartate 111 functions as the Proton acceptor in the catalytic mechanism. K(+) is bound at residue aspartate 131. Serine 134 contacts ATP. Threonine 186 serves as a coordination point for substrate.

This sequence belongs to the type III pantothenate kinase family. In terms of assembly, homodimer. The cofactor is NH4(+). Requires K(+) as cofactor.

It is found in the cytoplasm. It catalyses the reaction (R)-pantothenate + ATP = (R)-4'-phosphopantothenate + ADP + H(+). Its pathway is cofactor biosynthesis; coenzyme A biosynthesis; CoA from (R)-pantothenate: step 1/5. Catalyzes the phosphorylation of pantothenate (Pan), the first step in CoA biosynthesis. This is Type III pantothenate kinase from Mycobacterium leprae (strain Br4923).